A 545-amino-acid chain; its full sequence is Phenylalanine--tRNA ligase beta subunit (545 aa).

The 76-residue stretch at 268–343 folds into the B5 domain; sequence FLHKIQNVRE…MSIGYNNLEP (76 aa). Mg(2+) contacts are provided by aspartate 321, aspartate 327, glutamate 330, and aspartate 331.

The protein belongs to the phenylalanyl-tRNA synthetase beta subunit family. Type 2 subfamily. In terms of assembly, tetramer of two alpha and two beta subunits. Mg(2+) is required as a cofactor.

The protein resides in the cytoplasm. The catalysed reaction is tRNA(Phe) + L-phenylalanine + ATP = L-phenylalanyl-tRNA(Phe) + AMP + diphosphate + H(+). The protein is Phenylalanine--tRNA ligase beta subunit of Saccharolobus islandicus (strain M.16.27) (Sulfolobus islandicus).